A 148-amino-acid polypeptide reads, in one-letter code: Small ribosomal subunit protein uS15 (148 aa).

Residues 1–14 (MGRLHSHRHGKSHS) show a composition bias toward basic residues. The disordered stretch occupies residues 1–27 (MGRLHSHRHGKSHSIRPSSPKAPSWIQ).

It belongs to the universal ribosomal protein uS15 family. As to quaternary structure, part of the 30S ribosomal subunit.

The chain is Small ribosomal subunit protein uS15 from Cenarchaeum symbiosum (strain A).